A 338-amino-acid polypeptide reads, in one-letter code: Penicillin V acylase (338 aa).

A propeptide spans 1–3 (removed in mature form); sequence MLG. Cys-4 acts as the Nucleophile in catalysis.

Belongs to the peptidase C59 family. As to quaternary structure, homotetramer. Post-translationally, expressed as an inactive precursor that is cleaved autocatalytically at Gly-3/Cys-4 to generate an active enzyme. Processing exposes a catalytic N-terminal nucleophile residue with a free alpha amino group.

It carries out the reaction a penicillin + H2O = 6-aminopenicillanate + a carboxylate. With respect to regulation, hydrolase activity is rapidly inhibited by lysine modifying reagents. Functionally, catalyzes the hydrolysis of penicillin V to 6-aminopenicillanate (6-APA). Exhibits high specificity for penicillin V. Penicillin G and other related compounds are hydrolyzed at less than 10% of the rate of penicillin V. Among the cephalosporins, cephalosporin C is resistant to cleavage, whereas cephalosporin G is cleaved at about 1% of the rate of cleavage of penicillin V. This Lysinibacillus sphaericus (Bacillus sphaericus) protein is Penicillin V acylase.